We begin with the raw amino-acid sequence, 577 residues long: Proline--tRNA ligase (577 aa).

This sequence belongs to the class-II aminoacyl-tRNA synthetase family. ProS type 1 subfamily. In terms of assembly, homodimer.

The protein localises to the cytoplasm. The catalysed reaction is tRNA(Pro) + L-proline + ATP = L-prolyl-tRNA(Pro) + AMP + diphosphate. Functionally, catalyzes the attachment of proline to tRNA(Pro) in a two-step reaction: proline is first activated by ATP to form Pro-AMP and then transferred to the acceptor end of tRNA(Pro). As ProRS can inadvertently accommodate and process non-cognate amino acids such as alanine and cysteine, to avoid such errors it has two additional distinct editing activities against alanine. One activity is designated as 'pretransfer' editing and involves the tRNA(Pro)-independent hydrolysis of activated Ala-AMP. The other activity is designated 'posttransfer' editing and involves deacylation of mischarged Ala-tRNA(Pro). The misacylated Cys-tRNA(Pro) is not edited by ProRS. The sequence is that of Proline--tRNA ligase from Janthinobacterium sp. (strain Marseille) (Minibacterium massiliensis).